Consider the following 95-residue polypeptide: Mitochondrial import inner membrane translocase subunit Tim13 (95 aa).

N-acetylmethionine is present on methionine 1. Serine 7 is subject to Phosphoserine. A Twin CX3C motif motif is present at residues 46 to 69; the sequence is CFRKCIGKPGGSLDNSEQKCIAMC. 2 disulfide bridges follow: cysteine 46/cysteine 69 and cysteine 50/cysteine 65. Residue lysine 53 is modified to N6-succinyllysine.

This sequence belongs to the small Tim family. Heterohexamer; composed of 3 copies of TIMM8 (TIMM8A or TIMM8B) and 3 copies of TIMM13, named soluble 70 kDa complex. Associates with the TIM22 complex, whose core is composed of TIMM22. As to expression, present at high level in liver and brain, and at lower level in muscle and heart. In CNS sections, it is predominantly present in the soma and the dendritic portion of the Purkinje cells of the cerebellum, but not in the glial cells. Scattered expression also is also detected in the brain stem, olfactory bulb, substantia nigra, hippocampus and striatum (at protein level).

The protein localises to the mitochondrion inner membrane. In terms of biological role, mitochondrial intermembrane chaperone that participates in the import and insertion of some multi-pass transmembrane proteins into the mitochondrial inner membrane. Also required for the transfer of beta-barrel precursors from the TOM complex to the sorting and assembly machinery (SAM complex) of the outer membrane. Acts as a chaperone-like protein that protects the hydrophobic precursors from aggregation and guide them through the mitochondrial intermembrane space. The TIMM8-TIMM13 complex mediates the import of proteins such as TIMM23, SLC25A12/ARALAR1 and SLC25A13/ARALAR2, while the predominant TIMM9-TIMM10 70 kDa complex mediates the import of much more proteins. This chain is Mitochondrial import inner membrane translocase subunit Tim13 (Timm13), found in Mus musculus (Mouse).